Consider the following 598-residue polypeptide: Arginine--tRNA ligase (598 aa).

The 'HIGH' region signature appears at 135 to 145; that stretch reads ANPTGPIHIGG. Residues 229-248 are disordered; sequence VDGGTDEKGEPLGEGDSEQR. Over residues 231–248 the composition is skewed to basic and acidic residues; it reads GGTDEKGEPLGEGDSEQR.

Belongs to the class-I aminoacyl-tRNA synthetase family. In terms of assembly, monomer.

The protein localises to the cytoplasm. The enzyme catalyses tRNA(Arg) + L-arginine + ATP = L-arginyl-tRNA(Arg) + AMP + diphosphate. This is Arginine--tRNA ligase from Bifidobacterium animalis subsp. lactis (strain AD011).